Consider the following 115-residue polypeptide: UPF0102 protein NMCC_2054 (115 aa).

The protein belongs to the UPF0102 family.

This is UPF0102 protein NMCC_2054 from Neisseria meningitidis serogroup C (strain 053442).